Reading from the N-terminus, the 734-residue chain is ATP-dependent RNA helicase DDX50 (734 aa).

The disordered stretch occupies residues 1 to 131; that stretch reads MPGKLLWGDI…KAEETLTREQ (131 aa). The span at 11-20 shows a compositional bias: acidic residues; sequence MELEAPLEES. 2 stretches are compositionally biased toward basic and acidic residues: residues 38–51 and 67–86; these read HSES…RENG and REKL…EFSP. Phosphoserine is present on residues serine 41, serine 81, serine 85, serine 113, serine 119, and serine 120. Residues 115–131 show a composition bias toward basic and acidic residues; it reads NSHKSSDKAEETLTREQ. Residue lysine 122 forms a Glycyl lysine isopeptide (Lys-Gly) (interchain with G-Cter in SUMO2) linkage. The Q motif motif lies at 134–162; the sequence is GAFSNFSISEETIKLLKGRGVTYLFPIQV. The region spanning 165–344 is the Helicase ATP-binding domain; the sequence is FGPVYEGKDL…KKYMKSRYEQ (180 aa). 178 to 185 is an ATP binding site; it reads ARTGTGKT. Threonine 244 is subject to Phosphothreonine. Residues 287-290 carry the DEVD box motif; the sequence is DEVD. Positions 377–521 constitute a Helicase C-terminal domain; the sequence is DVLQVYSGSE…GVPSTMDLVK (145 aa). Serine 515 is modified (phosphoserine). Residues 664–734 are disordered; the sequence is YYDGNTSSNP…RSGGHKRNFD (71 aa). The segment covering 679–698 has biased composition (gly residues); it reads WSGGRSGRSGRSGGRSGGRS. Residues 699–709 are compositionally biased toward low complexity; the sequence is GRQSRQGSRSG. The span at 717 to 734 shows a compositional bias: basic residues; it reads RSGNRNRSRSGGHKRNFD.

It belongs to the DEAD box helicase family. DDX21/DDX50 subfamily. In terms of assembly, interacts with C1QBP. Interacts with the ubiquitin ligase CTLH complex through GID4. Interacts with TICAM1.

It is found in the nucleus. It localises to the nucleolus. The protein localises to the cytoplasm. It carries out the reaction ATP + H2O = ADP + phosphate + H(+). In terms of biological role, ATP-dependent RNA helicase that may play a role in various aspects of RNA metabolism including pre-mRNA splicing or ribosomal RNA production. Also acts as a viral restriction factor and promotes the activation of the NF-kappa-B and IRF3 signaling pathways following its stimulation with viral RNA or infection with RNA and DNA viruses. For instance, decreases vaccinia virus, herpes simplex virus, Zika virus or dengue virus replication during the early stage of infection. Mechanistically, acts via the adapter TICAM1 and independently of the DDX1-DDX21-DHX36 helicase complex to induce the production of interferon-beta. The sequence is that of ATP-dependent RNA helicase DDX50 (Ddx50) from Mus musculus (Mouse).